The sequence spans 508 residues: MRFLSLVGNSFGCSASGERLVSAARDGDLQEAKALLDYNPRLARYSTFGVRNSPLHYSAAQGHHEIVSLLVESGVDINLRNYRGQTALMQACQHGHWEVVLILILFGANIHRSDYLNGGTALHLAALNGHPRCIRILLSEYIPSVPNCWSLLKNKKTSVAGFDSSVLHEVINRAADGGITPLHVAALNGHIETVQLLLDLGASVTQVTVEDGTTIDLIGAGSTALHYASCGGNTQCCQLLISKGACLAAVNSNGWTPMMVARSWHRNWLEEILNPTTEQPQLHLPNVPSPFLCLPLMSIVNIAQECGWRENDCLTPCRDPCAVCLERKCTVAADGCAHEFCTNCALYLSTTSITSSKTSNVTPGSVPCPLCRNGIVSFTKLPHTTATTRTSTSSRTSISLSFCTCSSDVLDTALLTNPHYSCKPVVSRTGSRTPQSARSSAFRSLSCRRFPPSLCLGGSDVDEPRSRLIGGSYSRSGVGFRRSTSQVEGKRSWFSALNHCVTTGGSAC.

ANK repeat units follow at residues 50–79 (VRNS…DINL), 83–112 (RGQT…NIHR), 117–147 (NGGT…SVPN), 177–206 (GGIT…SVTQ), and 220–249 (AGST…CLAA). The segment at 321 to 372 (CAVCLERKCTVAADGCAHEFCTNCALYLSTTSITSSKTSNVTPGSVPCPLCR) adopts an RING-type zinc-finger fold.

As to quaternary structure, interacts with ACS4 and ACS7. As to expression, expressed in the vascular system of primary root, vascular tissue of leaves, stems and anthers.

It carries out the reaction S-ubiquitinyl-[E2 ubiquitin-conjugating enzyme]-L-cysteine + [acceptor protein]-L-lysine = [E2 ubiquitin-conjugating enzyme]-L-cysteine + N(6)-ubiquitinyl-[acceptor protein]-L-lysine.. It functions in the pathway protein modification; protein ubiquitination. E3 ubiquitin-protein ligase that mediates ubiquitination of ACC synthases (ACS). Negatively regulates ethylene biosynthesis probably via ubiquitin-dependent degradation of ACS4 and ACS7 enzymes. Regulates lateral root formation and development by controlling ethylene production which inhibits lateral root formation at high concentration. The sequence is that of E3 ubiquitin-protein ligase XBAT32 (XBAT32) from Arabidopsis thaliana (Mouse-ear cress).